The sequence spans 295 residues: Fatty acid desaturase 4-like 1, chloroplastic (295 aa).

Residues 1–29 (MAVSFQTKNPLRPITNIPRSYGPTRVRVT) constitute a chloroplast transit peptide. Transmembrane regions (helical) follow at residues 72–92 (WVAAGSTTIFASFAKSIIGGF), 102–122 (LACYAGYVFADLGSGVYHWAI), and 175–195 (LAINNPLFHSFVSTFAFCILL).

Belongs to the fatty acid desaturase CarF family.

Its subcellular location is the plastid. It is found in the chloroplast membrane. It participates in lipid metabolism; fatty acid metabolism. In terms of biological role, fatty acid desaturase involved in the production of chloroplast-specific phosphatidylglycerol molecular species. Catalyzes the formation of a trans double bond introduced close to the carboxyl group of palmitic acid, which is specifically esterified to the sn-2 glyceryl carbon of phosphatidylglycerol. The sequence is that of Fatty acid desaturase 4-like 1, chloroplastic (FAD4L1) from Arabidopsis thaliana (Mouse-ear cress).